Reading from the N-terminus, the 84-residue chain is Protein Tlp homolog (84 aa).

Positions 1–20 (MGKEERYTKKPKPDDRSDNV) are disordered.

This sequence belongs to the Tlp family.

This chain is Protein Tlp homolog, found in Caldanaerobacter subterraneus subsp. tengcongensis (strain DSM 15242 / JCM 11007 / NBRC 100824 / MB4) (Thermoanaerobacter tengcongensis).